Reading from the N-terminus, the 353-residue chain is Protein RecA (353 aa).

80–87 (GPESSGKT) is a binding site for ATP.

This sequence belongs to the RecA family.

It localises to the cytoplasm. In terms of biological role, can catalyze the hydrolysis of ATP in the presence of single-stranded DNA, the ATP-dependent uptake of single-stranded DNA by duplex DNA, and the ATP-dependent hybridization of homologous single-stranded DNAs. It interacts with LexA causing its activation and leading to its autocatalytic cleavage. In Chlorobium chlorochromatii (strain CaD3), this protein is Protein RecA.